A 497-amino-acid chain; its full sequence is L-asparagine permease (497 aa).

12 helical membrane passes run 34–54, 58–78, 109–129, 146–166, 171–191, 219–239, 264–284, 298–318, 353–373, 378–398, 422–442, and 448–468; these read QVQMIAIGGAIGTGLFLGAGA, MAGPALALVYLICGIFSFFIL, VAGWMYFINWAMTGIVDITAV, VFALGALTIVGTMNMIGVKWF, FWFALIKVLAIVIFLVVGTIF, LLPALVLIQGVVFAFASIELV, IGLFYVGSVVLLVLLLPWNAY, LGVPYIGSIMNIVVLTAALSS, YAGILATLVVYVVGVFLNYLV, FEIVLNFASLGIIASWAFIMV, APFTSWLTLLFLLSVLVLMAF, and TYTIASLPLIAILLVAGWFGV.

It belongs to the amino acid-polyamine-organocation (APC) superfamily. Amino acid transporter (AAT) (TC 2.A.3.1) family.

It localises to the cell inner membrane. In Salmonella typhimurium (strain LT2 / SGSC1412 / ATCC 700720), this protein is L-asparagine permease (ansP).